Consider the following 400-residue polypeptide: tRNA-specific adenosine deaminase TAD3 (400 aa).

Positions 250 to 385 (SQWHPLRHAS…KSLNHHYAVF (136 aa)) constitute a CMP/dCMP-type deaminase domain. Histidine 257 is a binding site for Zn(2+). The segment at 273 to 320 (LFPNPSKIFDQDHVPPSNTDSPAKKQKTSSQSPDVQNDSREETVRDPS) is disordered. The segment covering 309–320 (NDSREETVRDPS) has biased composition (basic and acidic residues). The Zn(2+) site is built by cysteine 339 and cysteine 342.

The protein belongs to the cytidine and deoxycytidylate deaminase family. ADAT3 subfamily. Interacts with TAD2.

Its subcellular location is the nucleus. It localises to the cytoplasm. The enzyme catalyses adenosine(34) in tRNA + H2O + H(+) = inosine(34) in tRNA + NH4(+). Involved in RNA editing. Catalyzes the specific deamination of adenosine-34 in several cytosolic tRNA species. Generates inosine at the wobble position of the anticodon loop. This Arabidopsis thaliana (Mouse-ear cress) protein is tRNA-specific adenosine deaminase TAD3.